The following is a 144-amino-acid chain: uncharacterized protein (144 aa).

The stretch at 48–119 forms a coiled coil; it reads ELNKLKAKAD…KETEEPKMEL (72 aa).

This is an uncharacterized protein from Archaeoglobus fulgidus (strain ATCC 49558 / DSM 4304 / JCM 9628 / NBRC 100126 / VC-16).